Here is a 513-residue protein sequence, read N- to C-terminus: Beta-glucosidase 5 (513 aa).

An N-terminal signal peptide occupies residues 1–26 (MAAAIAVVYLSLLLLLLHGAAPAVLG). Q46 serves as a coordination point for a beta-D-glucoside. E192 functions as the Proton donor in the catalytic mechanism. C211 and C220 are oxidised to a cystine. Residues N224 and N273 are each glycosylated (N-linked (GlcNAc...) asparagine). A beta-D-glucoside contacts are provided by Y336 and E405. Residue E405 is the Nucleophile of the active site. An N-linked (GlcNAc...) asparagine glycan is attached at N412. A beta-D-glucoside contacts are provided by residues W447, 454-455 (EY), and Y463.

Belongs to the glycosyl hydrolase 1 family.

The enzyme catalyses Hydrolysis of terminal, non-reducing beta-D-glucosyl residues with release of beta-D-glucose.. This is Beta-glucosidase 5 (BGLU5) from Oryza sativa subsp. japonica (Rice).